The following is a 49-amino-acid chain: uncharacterized protein (49 aa).

Residues 23 to 43 (LYVISFVLFIVLFFGMFFKLI) form a helical membrane-spanning segment.

The protein localises to the host membrane. This is an uncharacterized protein from Spiroplasma melliferum (SpV1).